The sequence spans 481 residues: MASAAASSAFSLLKSTGAVASSAGTRARASLLPIPSTSVSARPLGFSATLDSRRFSLHVASKVESVRGKGSRGVVSMAKKSVGDLTSADLKGKKVFVRADLNVPLDDNQTITDDTRIRAAIPTIKYLIENGAKVILSTHLGRPKGVTPKFSLAPLVPRLSELLGIEVTKADDCIGPEVESLVASLPEGGVLLLENVRFYKEEEKNDPEFAKKLASLADLYVNDAFGTAHRAHASTEGVTKFLKPSVAGFLLQKELDYLVGAVSNPKRPFAAIVGGSKVSSKIGVIESLLEKCDILLLGGGMIFTFYKAQGLSVGSSLVEEDKLELATELLAKAKAKGVSLLLPTDVVVADKFAPDANSKIVPASGIEDGWMGLDIGPDSIKTFNEALDTTQTVIWNGPMGVFEMEKFAAGTEAIANKLAELSEKGVTTIIGGGDSVAAVEKVGVAGVMSHISTGGGASLELLEGKVLPGVIALDEAIPVTV.

A chloroplast-targeting transit peptide spans 1–75; sequence MASAAASSAF…VRGKGSRGVV (75 aa). At Ser81 the chain carries Phosphoserine. (2R)-3-phosphoglycerate is bound by residues Ala99, Asp100, Asn102, Arg116, Thr138, His139, Gly141, Arg142, Arg197, His229, and Arg230. Gly275 provides a ligand contact to ADP. Gly275 is a binding site for CDP. Residues Lys277 and Lys281 each coordinate AMP. Residue Lys281 participates in ATP binding. Gly299 contacts ADP. Position 299 (Gly299) interacts with CDP. The AMP site is built by Gly300 and Gly372. ATP contacts are provided by Gly300 and Gly372. Gly397 and Phe402 together coordinate CDP. Phe402 contributes to the ADP binding site. Glu403 contacts AMP. Residues Glu403, Asp434, and Ser435 each coordinate ATP. Residue Asp434 participates in Mg(2+) binding.

The protein belongs to the phosphoglycerate kinase family. As to quaternary structure, monomer. Binds to FTSZ2-1 and FTSZ2-2. Mg(2+) is required as a cofactor.

Its subcellular location is the plastid. The protein localises to the chloroplast. The catalysed reaction is (2R)-3-phosphoglycerate + ATP = (2R)-3-phospho-glyceroyl phosphate + ADP. Its pathway is carbohydrate biosynthesis; Calvin cycle. May trigger the phosphorylation of FTSZ2-1 and FTSZ2-2. The protein is Phosphoglycerate kinase 1, chloroplastic of Arabidopsis thaliana (Mouse-ear cress).